The primary structure comprises 20 residues: Unknown protein from 2D-PAGE of needles (20 aa).

This Pinus pinaster (Maritime pine) protein is Unknown protein from 2D-PAGE of needles.